Consider the following 405-residue polypeptide: Scarecrow-like protein 23 (405 aa).

Residues 1-20 (MTTKRIDRDLPSSDDPSSAK) are disordered. One can recognise a GRAS domain in the interval 31–400 (ENDGAAAIKL…LSLLTASAWK (370 aa)). Positions 38–102 (IKLLSLLLQC…ISSYLSGACS (65 aa)) are leucine repeat I (LRI). The LxCxE motif signature appears at 45–49 (LQCAE). A VHIID region spans residues 121–186 (LQTYNSVSPL…RKLRSIRITG (66 aa)). The short motif at 152-156 (VHIID) is the VHIID element. The tract at residues 196 to 228 (STGRRLADFASSLNLPFEFHPIEGIIGNLIDPS) is leucine repeat II (LRII). Positions 238–327 (VVVHWMQHRL…QIVLGTEIRN (90 aa)) are PFYRE. The interval 330–400 (AHGGGRRKRM…LSLLTASAWK (71 aa)) is SAW.

Belongs to the GRAS family. In terms of assembly, interacts with SHR. In terms of tissue distribution, expressed in seedlings, cotyledons, shoot apex, leaves and flowers.

The protein localises to the nucleus. In terms of biological role, probable transcription factor involved in plant development. The polypeptide is Scarecrow-like protein 23 (SCL23) (Arabidopsis thaliana (Mouse-ear cress)).